Reading from the N-terminus, the 184-residue chain is ATP synthase subunit delta (184 aa).

Belongs to the ATPase delta chain family. F-type ATPases have 2 components, F(1) - the catalytic core - and F(0) - the membrane proton channel. F(1) has five subunits: alpha(3), beta(3), gamma(1), delta(1), epsilon(1). F(0) has three main subunits: a(1), b(2) and c(10-14). The alpha and beta chains form an alternating ring which encloses part of the gamma chain. F(1) is attached to F(0) by a central stalk formed by the gamma and epsilon chains, while a peripheral stalk is formed by the delta and b chains.

The protein resides in the cell membrane. Functionally, f(1)F(0) ATP synthase produces ATP from ADP in the presence of a proton or sodium gradient. F-type ATPases consist of two structural domains, F(1) containing the extramembraneous catalytic core and F(0) containing the membrane proton channel, linked together by a central stalk and a peripheral stalk. During catalysis, ATP synthesis in the catalytic domain of F(1) is coupled via a rotary mechanism of the central stalk subunits to proton translocation. This protein is part of the stalk that links CF(0) to CF(1). It either transmits conformational changes from CF(0) to CF(1) or is implicated in proton conduction. In Wolbachia pipientis subsp. Culex pipiens (strain wPip), this protein is ATP synthase subunit delta.